A 342-amino-acid chain; its full sequence is Thymidylate synthase (342 aa).

Residues R31 and R156 to R157 contribute to the dUMP site. C176 acts as the Nucleophile in catalysis. DUMP-binding positions include R196 to D199, N207, and H237 to Y239. Residue D199 participates in (6R)-5,10-methylene-5,6,7,8-tetrahydrofolate binding. A341 contacts (6R)-5,10-methylene-5,6,7,8-tetrahydrofolate.

This sequence belongs to the thymidylate synthase family. Bacterial-type ThyA subfamily. Homodimer.

The protein resides in the cytoplasm. The catalysed reaction is dUMP + (6R)-5,10-methylene-5,6,7,8-tetrahydrofolate = 7,8-dihydrofolate + dTMP. It functions in the pathway pyrimidine metabolism; dTTP biosynthesis. Functionally, catalyzes the reductive methylation of 2'-deoxyuridine-5'-monophosphate (dUMP) to 2'-deoxythymidine-5'-monophosphate (dTMP) while utilizing 5,10-methylenetetrahydrofolate (mTHF) as the methyl donor and reductant in the reaction, yielding dihydrofolate (DHF) as a by-product. This enzymatic reaction provides an intracellular de novo source of dTMP, an essential precursor for DNA biosynthesis. This chain is Thymidylate synthase, found in Haloferax volcanii (Halobacterium volcanii).